A 258-amino-acid polypeptide reads, in one-letter code: 5'-nucleotidase SurE (258 aa).

4 residues coordinate a divalent metal cation: Asp-9, Asp-10, Ser-40, and Asn-95.

This sequence belongs to the SurE nucleotidase family. Requires a divalent metal cation as cofactor.

The protein localises to the cytoplasm. The catalysed reaction is a ribonucleoside 5'-phosphate + H2O = a ribonucleoside + phosphate. Nucleotidase that shows phosphatase activity on nucleoside 5'-monophosphates. The chain is 5'-nucleotidase SurE from Nitratiruptor sp. (strain SB155-2).